A 209-amino-acid chain; its full sequence is Xanthine phosphoribosyltransferase 1 (209 aa).

Residue S79 is modified to Phosphoserine.

Its subcellular location is the cytoplasm. May act as a xanthine phosphoribosyltransferase involved in the synthesis of purine nucleotides. Such activity is however unclear in vivo. The chain is Xanthine phosphoribosyltransferase 1 (XPT1) from Saccharomyces cerevisiae (strain ATCC 204508 / S288c) (Baker's yeast).